A 119-amino-acid chain; its full sequence is uncharacterized protein (119 aa).

The tract at residues 86–119 (KKQRMKMLTEQEEEEEEEEEEPPKPKKKVINRKK) is disordered. Residues 95-106 (EQEEEEEEEEEE) are compositionally biased toward acidic residues. The span at 110-119 (PKKKVINRKK) shows a compositional bias: basic residues.

This is an uncharacterized protein from Sputnik virophage.